A 618-amino-acid polypeptide reads, in one-letter code: Indolepyruvate oxidoreductase subunit IorA (618 aa).

2 4Fe-4S ferredoxin-type domains span residues 558–587 (GRPM…VTRE) and 588–617 (GEVF…PEGK). Residues C568, C571, C574, C580, C597, C600, C603, and C607 each coordinate [4Fe-4S] cluster.

Heterodimer of the IorA and IorB subunits. Requires [4Fe-4S] cluster as cofactor.

The catalysed reaction is indole-3-pyruvate + 2 oxidized [2Fe-2S]-[ferredoxin] + CoA = (indol-3-yl)acetyl-CoA + 2 reduced [2Fe-2S]-[ferredoxin] + CO2 + H(+). Functionally, catalyzes the ferredoxin-dependent oxidative decarboxylation of arylpyruvates. The sequence is that of Indolepyruvate oxidoreductase subunit IorA (iorA) from Methanothermobacter thermautotrophicus (strain ATCC 29096 / DSM 1053 / JCM 10044 / NBRC 100330 / Delta H) (Methanobacterium thermoautotrophicum).